The chain runs to 406 residues: Mitochondrial ribosome-associated GTPase 2 (406 aa).

Residues 15–406 (FEGVGHWALS…LGQGRQPLRW (392 aa)) form a localized in the mitochondria region. The interval 30 to 406 (KPSRLLPQQA…LGQGRQPLRW (377 aa)) is not localized in the mitochondria. The Obg domain occupies 70–224 (RYFVDYRRVL…RVLHLELKTV (155 aa)). Residues 225-390 (AHAGMVGFPN…LLLHLKVLYD (166 aa)) enclose the OBG-type G domain. GTP-binding positions include 231–238 (GFPNAGKS), 256–260 (FTTLK), 278–281 (DIPG), 345–348 (NKID), and 371–373 (SAL). Mg(2+)-binding residues include serine 238 and threonine 258.

The protein belongs to the TRAFAC class OBG-HflX-like GTPase superfamily. OBG GTPase family. In terms of assembly, associates with the mitochondrial ribosome large subunit; the association occurs in a GTP-dependent manner. It depends on Mg(2+) as a cofactor.

It localises to the mitochondrion. The protein resides in the mitochondrion inner membrane. Its function is as follows. Plays a role in the regulation of the mitochondrial ribosome assembly and of translational activity. Displays GTPase activity. Involved in the ribosome maturation process. This Pongo abelii (Sumatran orangutan) protein is Mitochondrial ribosome-associated GTPase 2 (MTG2).